A 689-amino-acid polypeptide reads, in one-letter code: DNA ligase (689 aa).

NAD(+) is bound by residues 51–55 (DSEYD), 100–101 (SL), and Glu129. Lys131 (N6-AMP-lysine intermediate) is an active-site residue. The NAD(+) site is built by Arg152, Glu189, Lys308, and Lys332. Zn(2+) is bound by residues Cys426, Cys429, Cys444, and Cys450. The 81-residue stretch at 609 to 689 (ADEQPLKGQT…ELLALLAANS (81 aa)) folds into the BRCT domain.

It belongs to the NAD-dependent DNA ligase family. LigA subfamily. Mg(2+) serves as cofactor. Mn(2+) is required as a cofactor.

The catalysed reaction is NAD(+) + (deoxyribonucleotide)n-3'-hydroxyl + 5'-phospho-(deoxyribonucleotide)m = (deoxyribonucleotide)n+m + AMP + beta-nicotinamide D-nucleotide.. In terms of biological role, DNA ligase that catalyzes the formation of phosphodiester linkages between 5'-phosphoryl and 3'-hydroxyl groups in double-stranded DNA using NAD as a coenzyme and as the energy source for the reaction. It is essential for DNA replication and repair of damaged DNA. In Shewanella sp. (strain ANA-3), this protein is DNA ligase.